The following is a 174-amino-acid chain: Ribulose bisphosphate carboxylase small subunit, chloroplastic 1 (174 aa).

Residues 1–45 (MAPAVMASSATTVAPFQGLKSTAGLPVSRRSRGSLGSVSNGGRIR) constitute a chloroplast transit peptide.

This sequence belongs to the RuBisCO small chain family. Heterohexadecamer of 8 large and 8 small subunits.

It localises to the plastid. The protein localises to the chloroplast. Functionally, ruBisCO catalyzes two reactions: the carboxylation of D-ribulose 1,5-bisphosphate, the primary event in carbon dioxide fixation, as well as the oxidative fragmentation of the pentose substrate. Both reactions occur simultaneously and in competition at the same active site. Although the small subunit is not catalytic it is essential for maximal activity. The chain is Ribulose bisphosphate carboxylase small subunit, chloroplastic 1 from Triticum aestivum (Wheat).